The chain runs to 400 residues: Phosphoribosylamine--glycine ligase (400 aa).

The ATP-grasp domain occupies 99-303 (KRFMKKYGIR…FVNAVLEGYR (205 aa)). 125–186 (IKKFSPPYVI…DEFLAGNELS (62 aa)) provides a ligand contact to ATP. Mg(2+) is bound by residues E273 and N275.

The protein belongs to the GARS family. Requires Mg(2+) as cofactor. Mn(2+) is required as a cofactor.

It catalyses the reaction 5-phospho-beta-D-ribosylamine + glycine + ATP = N(1)-(5-phospho-beta-D-ribosyl)glycinamide + ADP + phosphate + H(+). It participates in purine metabolism; IMP biosynthesis via de novo pathway; N(1)-(5-phospho-D-ribosyl)glycinamide from 5-phospho-alpha-D-ribose 1-diphosphate: step 2/2. This is Phosphoribosylamine--glycine ligase from Thermotoga maritima (strain ATCC 43589 / DSM 3109 / JCM 10099 / NBRC 100826 / MSB8).